Consider the following 524-residue polypeptide: 2-isopropylmalate synthase (524 aa).

Residues 12-274 (VIIFDTTLRD…WNNIETTMLT (263 aa)) enclose the Pyruvate carboxyltransferase domain. The Mn(2+) site is built by D21, H209, H211, and N245. The regulatory domain stretch occupies residues 398-524 (KLNSLTVIAG…EAVPAVAAAG (127 aa)).

It belongs to the alpha-IPM synthase/homocitrate synthase family. LeuA type 1 subfamily. As to quaternary structure, homodimer. Mn(2+) serves as cofactor.

The protein resides in the cytoplasm. The catalysed reaction is 3-methyl-2-oxobutanoate + acetyl-CoA + H2O = (2S)-2-isopropylmalate + CoA + H(+). The protein operates within amino-acid biosynthesis; L-leucine biosynthesis; L-leucine from 3-methyl-2-oxobutanoate: step 1/4. Functionally, catalyzes the condensation of the acetyl group of acetyl-CoA with 3-methyl-2-oxobutanoate (2-ketoisovalerate) to form 3-carboxy-3-hydroxy-4-methylpentanoate (2-isopropylmalate). The chain is 2-isopropylmalate synthase from Rhodopseudomonas palustris (strain HaA2).